Here is a 520-residue protein sequence, read N- to C-terminus: Probable E3 ubiquitin-protein ligase XBOS33 (520 aa).

5 ANK repeats span residues 44–73 (GLNSPLHFAAAKGHLDIVTLLLEKGADVNV), 77–106 (CGQTALMHACRHGHWEVVQMLLLFRCNVTR), 111–140 (SGRTALHFAAHDGLVRCVRLLLADFVPSAP), 185–214 (GGVTALHMAALNGHFDCMQLLIDLGANVSA), and 228–258 (AGSTPLHYAAGGGNAECCQLLLSKGASKLTL). An RING-type zinc finger spans residues 327–377 (CAVCLERSCSVAAEGCCHEFCIKCALYLCSTSNTRVEFTGPPGSIPCPLCR). Positions 467–479 (QDGSEVQSPQPSH) are enriched in polar residues. Positions 467 to 493 (QDGSEVQSPQPSHCASMEMDKREQQDL) are disordered. A compositionally biased stretch (basic and acidic residues) spans 484–493 (EMDKREQQDL).

It catalyses the reaction S-ubiquitinyl-[E2 ubiquitin-conjugating enzyme]-L-cysteine + [acceptor protein]-L-lysine = [E2 ubiquitin-conjugating enzyme]-L-cysteine + N(6)-ubiquitinyl-[acceptor protein]-L-lysine.. It functions in the pathway protein modification; protein ubiquitination. The chain is Probable E3 ubiquitin-protein ligase XBOS33 (XBOS33) from Oryza sativa subsp. japonica (Rice).